We begin with the raw amino-acid sequence, 435 residues long: Serine protease snk (435 aa).

The N-terminal stretch at 1 to 27 is a signal peptide; the sequence is MIILWSLIVHLQLTCLHLILQTPNLEA. The 47-residue stretch at 92–138 folds into the Clip domain; it reads FCRRSFDGRSGYCILAYQCLHVIREYRVHGTRIDICTHRNNVPVICC. 7 disulfides stabilise this stretch: C93-C137, C104-C127, C110-C138, C179-C303, C220-C236, C346-C366, and C377-C408. The Peptidase S1 domain maps to 186-432; the sequence is IVGGTPTRHG…YLDWIEKIAF (247 aa). The active-site Charge relay system is H235. The N-linked (GlcNAc...) asparagine glycan is linked to N255. The Charge relay system role is filled by D283. S381 serves as the catalytic Charge relay system.

The protein belongs to the peptidase S1 family. CLIP subfamily. As to quaternary structure, interacts (via N-terminal prodomain) with ea/easter (via Peptidase domain); leads to proteolytic activation of ea by snk. This interaction does not require sulfation of a vitelline membrane component by pip but proteolytic cleavage of ea by snk does. In terms of processing, proteolytically activated by gd. May also be cleaved by another protease.

It is found in the secreted. Functionally, component of the extracellular signaling pathway that establishes the dorsal-ventral pathway of the embryo. A protease cascade involving ndl, gd, snk and ea results in activation of the spz Toll receptor ligand; acts downstream of ndl and gd. Activation of ea requires both activation of the ndl-gd-snk protease cascade and sulfation of a vitelline membrane component by pip. Localized activation of the Toll receptor in the ventral region of the embryo defines cell identities along the dorsal-ventral continuum. In Drosophila melanogaster (Fruit fly), this protein is Serine protease snk.